A 300-amino-acid chain; its full sequence is MTDLPDTDFTQRFIFDESDTRGELVALERSYAEVLAKHPYPEPVAQLLGELMAAASLLVGTLKFDGLLILQARSEGPVPLLMIECSSEREIRGLARYDAEQIAPDATLADLMPNGVLALTVDPTNGQRYQGIVDLDGTNLAECFTNYFVMSQQTGTRFWLYADGRSARGLLLQQLPADRLRDQEERDASWQHLTALASTLTADELLSLDNETVLHRLYHEEAVRLFDVQPLRFRCSCSRERSGNALVSLGLEDAQQLVVEHGGSIEIDCQFCNERYLFDAADIAQLFAGAGVDTPSDTRH.

2 cysteine pairs are disulfide-bonded: cysteine 235/cysteine 237 and cysteine 269/cysteine 272.

Belongs to the HSP33 family. Post-translationally, under oxidizing conditions two disulfide bonds are formed involving the reactive cysteines. Under reducing conditions zinc is bound to the reactive cysteines and the protein is inactive.

It localises to the cytoplasm. Its function is as follows. Redox regulated molecular chaperone. Protects both thermally unfolding and oxidatively damaged proteins from irreversible aggregation. Plays an important role in the bacterial defense system toward oxidative stress. In Pseudomonas fluorescens (strain ATCC BAA-477 / NRRL B-23932 / Pf-5), this protein is 33 kDa chaperonin.